Reading from the N-terminus, the 226-residue chain is Putative O-methyltransferase Mvan_4497 (226 aa).

S-adenosyl-L-methionine contacts are provided by residues V53, E75, 77-78, S83, D101, and V102; that span reads GT. Residue D149 participates in substrate binding.

The protein belongs to the class I-like SAM-binding methyltransferase superfamily. Cation-dependent O-methyltransferase family.

This chain is Putative O-methyltransferase Mvan_4497, found in Mycolicibacterium vanbaalenii (strain DSM 7251 / JCM 13017 / BCRC 16820 / KCTC 9966 / NRRL B-24157 / PYR-1) (Mycobacterium vanbaalenii).